The primary structure comprises 92 residues: Probable Fe(2+)-trafficking protein (92 aa).

The protein belongs to the Fe(2+)-trafficking protein family.

Functionally, could be a mediator in iron transactions between iron acquisition and iron-requiring processes, such as synthesis and/or repair of Fe-S clusters in biosynthetic enzymes. In Anaeromyxobacter sp. (strain Fw109-5), this protein is Probable Fe(2+)-trafficking protein.